The chain runs to 648 residues: Sodium/nucleoside cotransporter 1 (648 aa).

Over 1-83 (MADDTPRQRE…LCREHWQLFE (83 aa)) the chain is Cytoplasmic. A helical membrane pass occupies residues 84-104 (WISKGLLSTAYIGFLIVACLL). Topologically, residues 105 to 108 (DFPR) are extracellular. The helical transmembrane segment at 109-129 (ALALFVITCVVLVFLAYNLLK) threads the bilayer. Over 130-147 (RLLGSKLKKCVKFQGHSC) the chain is Cytoplasmic. A helical transmembrane segment spans residues 148 to 168 (LSLWLKRGLALAAGLGVILWL). Residues 169 to 175 (SLDTAQR) lie on the Extracellular side of the membrane. The chain crosses the membrane as a helical span at residues 176-196 (PEQLVSFAGICVFLVLLFAGS). The Cytoplasmic segment spans residues 197-201 (KHHRA). The chain crosses the membrane as a helical span at residues 202-222 (VSWRAVSWGLGLQFVLGLFVI). The Extracellular segment spans residues 223 to 265 (RTEPGFVAFQWLGDQIRVFLSYTEAGSSFVFGEALVKDVFAFQ). The helical transmembrane segment at 266–286 (VLPIIVFFSCVMSVLYYLGLM) threads the bilayer. Residues 287–294 (QWVILKIA) are Cytoplasmic-facing. A helical membrane pass occupies residues 295–318 (WLMQVTMGTSATETLSVAGNIFVS). The Extracellular portion of the chain corresponds to 319-339 (QTEAPLLIRPYLADMTLSEVH). Residues 340 to 360 (VVMTGGYATIAGSLLGAYISF) traverse the membrane as a helical segment. A topological domain (cytoplasmic) is located at residue glycine 361. Residues 362–380 (IDASSLIAASVMAAPCALA) form a helical membrane-spanning segment. Residues 381 to 427 (LSKLVYPEVEESKFRSEEGVKLTYGDAQNLVEAASAGAAISVKVVAN) lie on the Extracellular side of the membrane. Residues 428 to 448 (IAANLIAFLAVLAFINAALSW) traverse the membrane as a helical segment. The Cytoplasmic segment spans residues 449–470 (LGDMVDIQGLSFQLICSYVLRP). Residues 471–491 (VAFLMGVAWEDCPVVAELLGI) form a helical membrane-spanning segment. Over 492–531 (KLFLNEFVAYQELSQYKQRRLAGAEEWLGDKKQWISVRAE) the chain is Extracellular. The helical transmembrane segment at 532–552 (ILTTYALCGFANFSSIGIMLG) threads the bilayer. At 553 to 571 (GLTSMVPQRRSDFSQIVLR) the chain is on the cytoplasmic side. The helical transmembrane segment at 572-592 (ALITGAFVSLVNACVAGILYV) threads the bilayer. The Extracellular portion of the chain corresponds to 593 to 648 (PRGVEVDCMSLLNQTVSSSSFEVYLCCRQVFQNTSLEFGQEALHNCCRFYNHTVCT). Asparagine 605, asparagine 625, and asparagine 643 each carry an N-linked (GlcNAc...) asparagine glycan.

Belongs to the concentrative nucleoside transporter (CNT) (TC 2.A.41) family. In terms of processing, N-glycosylated. N-glycosylation is required for localization to the plasma membrane and the transporter activity.

It localises to the cell membrane. Its subcellular location is the apical cell membrane. It catalyses the reaction uridine(out) + Na(+)(out) = uridine(in) + Na(+)(in). The catalysed reaction is thymidine(out) + Na(+)(out) = thymidine(in) + Na(+)(in). The enzyme catalyses cytidine(out) + Na(+)(out) = cytidine(in) + Na(+)(in). It carries out the reaction adenosine(out) + Na(+)(out) = adenosine(in) + Na(+)(in). With respect to regulation, due to its high apparent affinity but slow transport, adenosine could act as a negative regulator of pyrimidine transport under some conditions. In terms of biological role, sodium and pyrimidine nucleoside symporter of the plasma membrane that imports uridine, thymidine and cytidine into cells by coupling their transport to the transmembrane sodium electrochemical gradient. Also transports adenosine, an atypical substrate transported with high apparent affinity, but low maximum velocity. Therefore, exhibits the transport characteristics of the nucleoside transport system cit or N2 subtype (N2/cit). Involved in renal nucleoside (re)absorption. This is Sodium/nucleoside cotransporter 1 from Mus musculus (Mouse).